A 260-amino-acid chain; its full sequence is BTB/POZ domain-containing protein KCTD21 (260 aa).

Residues 3 to 72 (DPITLNVGGK…LRTSHLDLPE (70 aa)) form the BTB domain. Residues 88–112 (QVQPLIEALQEKEVELSKAEKNAML) adopt a coiled-coil conformation.

As to quaternary structure, homopentamer. Interacts with KCTD11; KCTD21 and KCTD11 may associate in pentameric assemblies. Interacts (via BTB domain) with CUL3; indicative for a participation in a BCR (BTB-CUL3-RBX1) E3 ubiquitin-protein ligase complex. As to expression, highly expressed in cerebellum and brain. Expression is down-regulated in medulloblastoma.

Its pathway is protein modification; protein ubiquitination. Functionally, probable substrate-specific adapter of a BCR (BTB-CUL3-RBX1) E3 ubiquitin-protein ligase complex mediating the ubiquitination and subsequent proteasomal degradation of target proteins. Promotes the ubiquitination of HDAC1. Can function as antagonist of the Hedgehog pathway by affecting the nuclear transfer of transcription factor GLI1; the function probably occurs via HDAC1 down-regulation, keeping GLI1 acetylated and inactive. Inhibits cell growth and tumorigenicity of medulloblastoma (MDB). The polypeptide is BTB/POZ domain-containing protein KCTD21 (KCTD21) (Homo sapiens (Human)).